Reading from the N-terminus, the 372-residue chain is Chaperone protein DnaJ (372 aa).

Residues glutamate 5–glycine 69 enclose the J domain. The segment at glycine 129–alanine 211 adopts a CR-type zinc-finger fold. Zn(2+)-binding residues include cysteine 142, cysteine 145, cysteine 159, cysteine 162, cysteine 185, cysteine 188, cysteine 199, and cysteine 202. CXXCXGXG motif repeat units follow at residues cysteine 142–glycine 149, cysteine 159–glycine 166, cysteine 185–glycine 192, and cysteine 199–glycine 206.

This sequence belongs to the DnaJ family. As to quaternary structure, homodimer. Requires Zn(2+) as cofactor.

Its subcellular location is the cytoplasm. Participates actively in the response to hyperosmotic and heat shock by preventing the aggregation of stress-denatured proteins and by disaggregating proteins, also in an autonomous, DnaK-independent fashion. Unfolded proteins bind initially to DnaJ; upon interaction with the DnaJ-bound protein, DnaK hydrolyzes its bound ATP, resulting in the formation of a stable complex. GrpE releases ADP from DnaK; ATP binding to DnaK triggers the release of the substrate protein, thus completing the reaction cycle. Several rounds of ATP-dependent interactions between DnaJ, DnaK and GrpE are required for fully efficient folding. Also involved, together with DnaK and GrpE, in the DNA replication of plasmids through activation of initiation proteins. The chain is Chaperone protein DnaJ from Streptococcus pneumoniae (strain ATCC BAA-255 / R6).